The following is a 395-amino-acid chain: Ribose-phosphate pyrophosphokinase 2, chloroplastic (395 aa).

The segment covering 1–23 (MASPAPRSLSSSSSSSSSSFCPS) has biased composition (low complexity). Residues 1-33 (MASPAPRSLSSSSSSSSSSFCPSISPPPRSPSR) are disordered. The transit peptide at 1–42 (MASPAPRSLSSSSSSSSSSFCPSISPPPRSPSRASLPFSVKC) directs the protein to the chloroplast. Positions 209, 211, 220, and 224 each coordinate Mg(2+). The tract at residues 295 to 310 (GKVAVMLDDMIDTAGT) is binding of phosphoribosylpyrophosphate.

This sequence belongs to the ribose-phosphate pyrophosphokinase family.

It is found in the plastid. The protein resides in the chloroplast. The enzyme catalyses D-ribose 5-phosphate + ATP = 5-phospho-alpha-D-ribose 1-diphosphate + AMP + H(+). The polypeptide is Ribose-phosphate pyrophosphokinase 2, chloroplastic (PRS2) (Spinacia oleracea (Spinach)).